Consider the following 85-residue polypeptide: MAHKKAGGSTRNGRDSEAKRLGVKRFGGEAVLAGSIIVRQRGTKFHAGTNVGCGKDHTLFALKDGKVKFEVKGPSNRKFISIEAE.

The segment at 1-20 is disordered; the sequence is MAHKKAGGSTRNGRDSEAKR.

This sequence belongs to the bacterial ribosomal protein bL27 family.

This chain is Large ribosomal subunit protein bL27, found in Serratia proteamaculans (strain 568).